The primary structure comprises 378 residues: Phosphoserine aminotransferase (378 aa).

Arginine 53 is an L-glutamate binding site. Positions 117, 167, 190, and 213 each coordinate pyridoxal 5'-phosphate. Lysine 214 carries the N6-(pyridoxal phosphate)lysine modification. Residue 255-256 (NT) participates in pyridoxal 5'-phosphate binding.

This sequence belongs to the class-V pyridoxal-phosphate-dependent aminotransferase family. SerC subfamily. In terms of assembly, homodimer. Pyridoxal 5'-phosphate is required as a cofactor.

It is found in the cytoplasm. It catalyses the reaction O-phospho-L-serine + 2-oxoglutarate = 3-phosphooxypyruvate + L-glutamate. It carries out the reaction 4-(phosphooxy)-L-threonine + 2-oxoglutarate = (R)-3-hydroxy-2-oxo-4-phosphooxybutanoate + L-glutamate. The protein operates within amino-acid biosynthesis; L-serine biosynthesis; L-serine from 3-phospho-D-glycerate: step 2/3. It participates in cofactor biosynthesis; pyridoxine 5'-phosphate biosynthesis; pyridoxine 5'-phosphate from D-erythrose 4-phosphate: step 3/5. In terms of biological role, catalyzes the reversible conversion of 3-phosphohydroxypyruvate to phosphoserine and of 3-hydroxy-2-oxo-4-phosphonooxybutanoate to phosphohydroxythreonine. The chain is Phosphoserine aminotransferase from Ralstonia pickettii (strain 12J).